Reading from the N-terminus, the 391-residue chain is MAEEGSSTKDSESFSVLNWDQVSRLHEVLTEVVPIHGRGNFPTLEITLKDIVQTVRGRLEEAGINVQDVRLNGSAAGHVLVKDNGLGCKDLDLIFHVALPTEAEFQLVRDVVLCSLLNFLPEGVNKLKISPVTLKEAYVQKLVKVCTDTDRWSLISLSNKNGRNVELKFVDSIRRQFEFSVDSFQIILDSLLFFYDCSGNPISEHFHPTVIGESMYGDFEEAFDHLQNRLIATKNPEEIRGGGLLKYSNLLVRDFRPADQEEIKTLERYMCSRFFIDFPDILEQQRKLETYLQNHFSDEERSKYDYLMILRRVVNESTVCLMGHERRQTLNLISLLALRVLAEQNIIPSATNVTCYYQPAPYVSDGNFNNYYIAHPPITYSQPYPTWLPCN.

This sequence belongs to the TENT family. Interacts with BCCIP and PABPC1; the interaction has no effect on TENT5C poly(A) polymerase function. Interacts with PLK4; this interaction leads to the TENT5C recruitment into the centrosome. As to expression, expressed by splenocytes, expression is increased in activated splenocytes.

The protein resides in the nucleus. Its subcellular location is the cytoplasm. It is found in the cytoskeleton. The protein localises to the microtubule organizing center. It localises to the centrosome. It catalyses the reaction RNA(n) + ATP = RNA(n)-3'-adenine ribonucleotide + diphosphate. Catalyzes the transfer of one adenosine molecule from an ATP to an mRNA poly(A) tail bearing a 3'-OH terminal group and enhances mRNA stability and gene expression. Can also elongate RNA oligos ending with uridine molecule, provided that the sequence is adenosine-rich. Mainly targets mRNAs encoding endoplasmic reticulum-targeted protein. The sequence is that of Terminal nucleotidyltransferase 5C from Mus musculus (Mouse).